The following is a 139-amino-acid chain: MAMTVHCDIVSAEGEIFSGLVEMVVAHGNLGDLGIAPGHAPLITNLKPGPITLTKQGGAHEVFYISGGFLEVQPNMVKVLADTVQRAADLDEAQAQEALKAAENALNLKGADFDYGAAAARLAEAAAQLRTVQQMRKGK.

This sequence belongs to the ATPase epsilon chain family. As to quaternary structure, F-type ATPases have 2 components, CF(1) - the catalytic core - and CF(0) - the membrane proton channel. CF(1) has five subunits: alpha(3), beta(3), gamma(1), delta(1), epsilon(1). CF(0) has three main subunits: a, b and c.

Its subcellular location is the cell inner membrane. In terms of biological role, produces ATP from ADP in the presence of a proton gradient across the membrane. In Pseudomonas putida (strain ATCC 47054 / DSM 6125 / CFBP 8728 / NCIMB 11950 / KT2440), this protein is ATP synthase epsilon chain.